Reading from the N-terminus, the 59-residue chain is Alpha-conotoxin CIA (59 aa).

The signal sequence occupies residues 1 to 16; that stretch reads MFTVFLLVVLTITVVS. A propeptide spanning residues 17–42 is cleaved from the precursor; sequence FPSDRASDGRDDEAKDERSDMYKSKR. Disulfide bonds link C46-C51 and C47-C57. The residue at position 57 (C57) is a Cysteine amide.

It belongs to the conotoxin A superfamily. Expressed by the venom duct.

The protein resides in the secreted. Its function is as follows. Alpha-conotoxins act on postsynaptic membranes, they bind to the nicotinic acetylcholine receptors (nAChR) and thus inhibit them. This toxin blocks the rat muscle nAChRs alpha-1-beta-1-gamma-delta (CHRNA1-CHRNB1-CHRNG-CHRND) (IC(50)=5.7 nM) and the rat neuronal nAChR alpha-3-beta-2/CHRNA3-CHRNB2 (IC(50)=2060 nM). In vivo, intramuscular injection into zebrafish produces rapid flaccid paralysis. The protein is Alpha-conotoxin CIA of Conus catus (Cat cone).